Here is a 30-residue protein sequence, read N- to C-terminus: Cliotide T6 (30 aa).

The segment at residues 1–30 (SIPCGESCVYIPCITTIVGCSCKDKVCYKN) is a cross-link (cyclopeptide (Ser-Asn)). 3 disulfides stabilise this stretch: Cys4–Cys20, Cys8–Cys22, and Cys13–Cys27.

Contains 3 disulfide bonds. In terms of processing, this is a cyclic peptide. As to expression, expressed in pod but not in flower, stem, shoot, leaf, seed, root and nodule (at protein level).

Its function is as follows. Probably participates in a plant defense mechanism. The protein is Cliotide T6 of Clitoria ternatea (Butterfly pea).